We begin with the raw amino-acid sequence, 361 residues long: Peptide chain release factor 1 (361 aa).

The residue at position 238 (glutamine 238) is an N5-methylglutamine.

The protein belongs to the prokaryotic/mitochondrial release factor family. In terms of processing, methylated by PrmC. Methylation increases the termination efficiency of RF1.

Its subcellular location is the cytoplasm. Functionally, peptide chain release factor 1 directs the termination of translation in response to the peptide chain termination codons UAG and UAA. This Mesomycoplasma hyopneumoniae (strain 7448) (Mycoplasma hyopneumoniae) protein is Peptide chain release factor 1.